Here is a 443-residue protein sequence, read N- to C-terminus: MSAMTPREIVSELNRFIIGQDGAKRAVAIALRNRWRRMQLDEELRHEVTPKNILMIGPTGVGKTEIARRLAKLANAPFIKVEATKFTEVGYVGKEVDSIIRDLTDSAIKMVRSQAIDRNRNRAEEMAEERILDVLIPPAKNNWGQNETPAEPSSARQSFRKKLREGQLDDKEIEIDLAAISGGVEIMAPPGMEEMTSQLQSMFQNIGGQKQKPRKLKIKEAMKLLVEEEAAKLVNQEELKQEAIDAVEQHGIVFIDEIDKVCKRGESSGPDVSREGVQRDLLPLVEGCTVSTKHGMVKTDHILFIASGAFQVASPSDLIPELQGRLPIRVELQALTTNDFERILTEPSASITVQYKALMNTEGVNITFTPDGISKIAAAAWQVNETAENIGARRLHTVLERLMEEISYDASDLNGQSITIDAEYVSKHLDELVADEDLSRFIL.

ATP is bound by residues Ile-18 and 60-65 (GVGKTE). The tract at residues 139-158 (AKNNWGQNETPAEPSSARQS) is disordered. Asp-256, Glu-321, and Arg-393 together coordinate ATP.

This sequence belongs to the ClpX chaperone family. HslU subfamily. In terms of assembly, a double ring-shaped homohexamer of HslV is capped on each side by a ring-shaped HslU homohexamer. The assembly of the HslU/HslV complex is dependent on binding of ATP.

The protein resides in the cytoplasm. In terms of biological role, ATPase subunit of a proteasome-like degradation complex; this subunit has chaperone activity. The binding of ATP and its subsequent hydrolysis by HslU are essential for unfolding of protein substrates subsequently hydrolyzed by HslV. HslU recognizes the N-terminal part of its protein substrates and unfolds these before they are guided to HslV for hydrolysis. In Erwinia tasmaniensis (strain DSM 17950 / CFBP 7177 / CIP 109463 / NCPPB 4357 / Et1/99), this protein is ATP-dependent protease ATPase subunit HslU.